We begin with the raw amino-acid sequence, 514 residues long: Peptide chain release factor 3 (514 aa).

The tr-type G domain occupies 8–268; the sequence is KKRRTFAIIS…TFLKFAPEPH (261 aa). GTP is bound by residues 17-24, 85-89, and 139-142; these read SHPDAGKT, DTPGH, and NKLD.

It belongs to the TRAFAC class translation factor GTPase superfamily. Classic translation factor GTPase family. PrfC subfamily.

The protein localises to the cytoplasm. Increases the formation of ribosomal termination complexes and stimulates activities of RF-1 and RF-2. It binds guanine nucleotides and has strong preference for UGA stop codons. It may interact directly with the ribosome. The stimulation of RF-1 and RF-2 is significantly reduced by GTP and GDP, but not by GMP. This Streptococcus pneumoniae (strain Hungary19A-6) protein is Peptide chain release factor 3.